Reading from the N-terminus, the 313-residue chain is WD repeat-containing protein 82-B (313 aa).

WD repeat units follow at residues Glu19–Thr58, Gly105–Leu144, His146–Phe184, Asp192–Thr231, Asn236–Val276, and Lys280–Asp313.

The protein belongs to the WD repeat SWD2 family. In terms of assembly, component of the SET1/COMPASS complex. Component of the PNUTS-PP1 phosphatase complex.

The protein resides in the nucleus. Its subcellular location is the chromosome. It localises to the cytoplasm. Regulatory component of the SET1/COMPASS complex implicated in the tethering of this complex to transcriptional start sites of active genes. Facilitates histone H3 'Lys-4' methylation (H3K4me) via recruitment of the SETD1A or SETD1B to the 'Ser-5' phosphorylated C-terminal domain (CTD) of RNA polymerase II large subunit (POLR2A). Component of the PNUTS-PP1 protein phosphatase complex, a protein phosphatase 1 (PP1) complex that promotes RNA polymerase II transcription pause-release, allowing transcription elongation. The sequence is that of WD repeat-containing protein 82-B (wdr82-b) from Xenopus laevis (African clawed frog).